A 155-amino-acid chain; its full sequence is NADH-ubiquinone oxidoreductase chain 6 (155 aa).

The next 4 helical transmembrane spans lie at 10 to 30 (ILAIGLLSPVQSIVCLIVLFV), 43 to 63 (LMGILYVLIYVGAIAILFLFI), 75 to 95 (GTIHPLIFTILIICLIPLDLS), and 133 to 153 (AIPMILIGLILILSVIGAIAI).

The protein belongs to the complex I subunit 6 family.

It is found in the mitochondrion membrane. The catalysed reaction is a ubiquinone + NADH + 5 H(+)(in) = a ubiquinol + NAD(+) + 4 H(+)(out). In terms of biological role, core subunit of the mitochondrial membrane respiratory chain NADH dehydrogenase (Complex I) that is believed to belong to the minimal assembly required for catalysis. Complex I functions in the transfer of electrons from NADH to the respiratory chain. The immediate electron acceptor for the enzyme is believed to be ubiquinone. This Candida parapsilosis (Yeast) protein is NADH-ubiquinone oxidoreductase chain 6 (ND6).